A 93-amino-acid polypeptide reads, in one-letter code: Small ribosomal subunit protein bS6 (93 aa).

This sequence belongs to the bacterial ribosomal protein bS6 family.

Functionally, binds together with bS18 to 16S ribosomal RNA. The chain is Small ribosomal subunit protein bS6 from Phytoplasma australiense.